The sequence spans 511 residues: Ribonuclease Y (511 aa).

A helical transmembrane segment spans residues 3–23; the sequence is VGILIGIIILGVVGFIQYTLI. A KH domain is found at 201–286; sequence TVHVVALPND…EMVERAIKDV (86 aa). An HD domain is found at 327 to 420; that stretch reads VLKHSIEVSY…VQAADAISAA (94 aa).

The protein belongs to the RNase Y family.

It is found in the cell membrane. Functionally, endoribonuclease that initiates mRNA decay. The chain is Ribonuclease Y from Clostridium perfringens (strain SM101 / Type A).